The following is a 196-amino-acid chain: Peptide deformylase (196 aa).

2 residues coordinate Fe cation: cysteine 103 and histidine 145. Glutamate 146 is an active-site residue. Position 149 (histidine 149) interacts with Fe cation.

The protein belongs to the polypeptide deformylase family. Fe(2+) serves as cofactor.

The enzyme catalyses N-terminal N-formyl-L-methionyl-[peptide] + H2O = N-terminal L-methionyl-[peptide] + formate. In terms of biological role, removes the formyl group from the N-terminal Met of newly synthesized proteins. Requires at least a dipeptide for an efficient rate of reaction. N-terminal L-methionine is a prerequisite for activity but the enzyme has broad specificity at other positions. In Rhodococcus opacus (strain B4), this protein is Peptide deformylase.